Reading from the N-terminus, the 276-residue chain is MTFAASVVRTAEGDGFTPPGPHDFDLPAIGGGHDTFEMFGQSFVLGVTKPMLQLVLAAIVLFVFFFAAARKRAMVPSRLQFVGEGFYGFVRNSLGRDIIGHDFAKFVPYLFTLFFFILLNNAFGSIPFIEFPTFSRSGMVYGLAVLSWVIYNAAGISKHGFVGYLKLQTVPGGIRGPILALLIPLEFMSNILVRPVTLALRLFANMFAGHLLLILFALGGEYILTEMSVQYAPVGILAWLMFVAVAFLEMLIQFLQAYVFVLLNAMYISGAVADEH.

7 consecutive transmembrane segments (helical) span residues 49–69 (KPML…FAAA), 109–129 (YLFT…IPFI), 137–157 (SGMV…AGIS), 173–193 (GIRG…NILV), 203–223 (FANM…GEYI), 232–252 (APVG…EMLI), and 253–273 (QFLQ…GAVA).

This sequence belongs to the ATPase A chain family. In terms of assembly, F-type ATPases have 2 components, CF(1) - the catalytic core - and CF(0) - the membrane proton channel. CF(1) has five subunits: alpha(3), beta(3), gamma(1), delta(1), epsilon(1). CF(0) has three main subunits: a(1), b(2) and c(9-12). The alpha and beta chains form an alternating ring which encloses part of the gamma chain. CF(1) is attached to CF(0) by a central stalk formed by the gamma and epsilon chains, while a peripheral stalk is formed by the delta and b chains.

Its subcellular location is the cell membrane. Functionally, key component of the proton channel; it plays a direct role in the translocation of protons across the membrane. In Nocardioides sp. (strain ATCC BAA-499 / JS614), this protein is ATP synthase subunit a.